A 302-amino-acid chain; its full sequence is MNTPDIAQVKRFLLNLQDEICQKLEQADGAARFAEDSWQRPGGGGGRSRVLRQGRVFEQAGVNFSHVHGDEMPASATAHRPELAGRSFEALGVSLVIHPENPYIPTSHANVRFFIAEKPGADPVWWFGGGFDLTPFYGFTEDAVHWHQTAFDLCLPFGAEVYPRYKKWCDDYFHLKHRNEQRGIGGLFFDDLNAHGFDQSFRFMQAVGRGFCDAYLPIVERRKALTWGERERDFQLYRRGRYVEFNLVWDRGTLFGLQTGGRTESILMSMPPLVRWEYDYQPREDSPEAALYRDFIVVKEWL.

Ser-94 provides a ligand contact to substrate. Residues His-98 and His-108 each coordinate a divalent metal cation. Catalysis depends on His-108, which acts as the Proton donor. Substrate is bound at residue 110–112 (NVR). A divalent metal cation contacts are provided by His-147 and His-177. Residues 242–277 (YVEFNLVWDRGTLFGLQTGGRTESILMSMPPLVRWE) form an important for dimerization region. 260–262 (GGR) is a substrate binding site.

The protein belongs to the aerobic coproporphyrinogen-III oxidase family. In terms of assembly, homodimer. A divalent metal cation is required as a cofactor.

The protein resides in the cytoplasm. The enzyme catalyses coproporphyrinogen III + O2 + 2 H(+) = protoporphyrinogen IX + 2 CO2 + 2 H2O. The protein operates within porphyrin-containing compound metabolism; protoporphyrin-IX biosynthesis; protoporphyrinogen-IX from coproporphyrinogen-III (O2 route): step 1/1. Involved in the heme biosynthesis. Catalyzes the aerobic oxidative decarboxylation of propionate groups of rings A and B of coproporphyrinogen-III to yield the vinyl groups in protoporphyrinogen-IX. The protein is Oxygen-dependent coproporphyrinogen-III oxidase of Erwinia tasmaniensis (strain DSM 17950 / CFBP 7177 / CIP 109463 / NCPPB 4357 / Et1/99).